Consider the following 41-residue polypeptide: Mu-conotoxin pn4c (41 aa).

Residues 1–24 constitute a propeptide that is removed on maturation; sequence DQPAERMQDDISSEHHPFFDPVKR.

The protein belongs to the conotoxin M superfamily. In terms of processing, contains 3 disulfide bonds. They are not added, since framework IV presents two different connectivities (I-V, II-III, IV-VI and I-III, II-V, IV-VI). Expressed by the venom duct.

Its subcellular location is the secreted. In terms of biological role, mu-conotoxins block voltage-gated sodium channels (Nav). Blocks reversibly sodium channels in molluskan neurons, but has no effect on sodium currents in bovine chromaffin cells or in rat brain synaptosomes. Induces paralysis in mollusks (C.retripictus). This chain is Mu-conotoxin pn4c, found in Conus pennaceus (Feathered cone).